Here is a 403-residue protein sequence, read N- to C-terminus: Creatinase (403 aa).

Residue histidine 232 is part of the active site.

This sequence belongs to the peptidase M24 family. Creatinase subfamily. As to quaternary structure, homodimer.

It catalyses the reaction creatine + H2O = sarcosine + urea. The protein is Creatinase of Pseudomonas putida (Arthrobacter siderocapsulatus).